The primary structure comprises 375 residues: Putative serine protease 47 (375 aa).

The first 23 residues, 1–23 (MGYCQGVSQVAVVLLMFPKEKEA), serve as a signal peptide directing secretion. Residues 41–60 (DGQLPMGPHSRASQVAPETT) form a disordered region. Residues 51–60 (RASQVAPETT) show a composition bias toward polar residues. Residues 81–323 (IYGGRDAAAG…FINWIDEIMR (243 aa)) enclose the Peptidase S1 domain. The cysteines at positions 106 and 122 are disulfide-linked. Active-site charge relay system residues include His-121 and Asp-172. N-linked (GlcNAc...) asparagine glycans are attached at residues Asn-183 and Asn-203. Residues Cys-206 and Cys-281 are joined by a disulfide bond. The active-site Charge relay system is the Ser-275.

Belongs to the peptidase S1 family.

It localises to the secreted. The chain is Putative serine protease 47 (PRSS47P) from Homo sapiens (Human).